Here is a 252-residue protein sequence, read N- to C-terminus: MGQKETFYRNWNGGGDFLRTVFGLGGLDHTNDSPAEQRYVNSLETSSMMAENDIGSLMPLVYTTVAFFVAVVLPHGSPMSNSHSSKKAFALLNWPRVLTSRNIWSISHGIFAASMFGSFWVQSAVGTIPLFGIVGFSWAVTCRIPYYLLHDELYRSSTQRNRQGDDLTDSQGLIHGIHNFSICLAQIVVLLMINTVWILASDDDGDSFLVWFLLLGGACALLAMYFTTRLREPENIKYEEIAMEEGDYGFSE.

The next 2 membrane-spanning stretches (helical) occupy residues 54–74 and 116–136; these read IGSL…VVLP and FGSF…IVGF. N179 carries an N-linked (GlcNAc...) asparagine glycan. A run of 2 helical transmembrane segments spans residues 180–200 and 208–228; these read FSIC…WILA and FLVW…YFTT.

The protein belongs to the major facilitator superfamily.

The protein localises to the membrane. It participates in mycotoxin biosynthesis. Its function is as follows. MFS-type transporter; part of the gene cluster that mediates the biosynthesis of the mycotoxin cyclochlorotine, a hepatotoxic and carcinogenic cyclic chlorinated pentapeptide. Most likely responsible for cyclochlorotine secretion and thereby may contribute to intrinsic resistance. The chain is MFS-type transporter cctQ from Talaromyces islandicus (Penicillium islandicum).